We begin with the raw amino-acid sequence, 191 residues long: Pyridoxal 5'-phosphate synthase subunit PdxT (191 aa).

46-48 (GES) contacts L-glutamine. Catalysis depends on C78, which acts as the Nucleophile. L-glutamine contacts are provided by residues R105 and 134-135 (IR). Active-site charge relay system residues include H170 and E172.

Belongs to the glutaminase PdxT/SNO family. As to quaternary structure, in the presence of PdxS, forms a dodecamer of heterodimers. Only shows activity in the heterodimer.

The enzyme catalyses aldehydo-D-ribose 5-phosphate + D-glyceraldehyde 3-phosphate + L-glutamine = pyridoxal 5'-phosphate + L-glutamate + phosphate + 3 H2O + H(+). It carries out the reaction L-glutamine + H2O = L-glutamate + NH4(+). It participates in cofactor biosynthesis; pyridoxal 5'-phosphate biosynthesis. Functionally, catalyzes the hydrolysis of glutamine to glutamate and ammonia as part of the biosynthesis of pyridoxal 5'-phosphate. The resulting ammonia molecule is channeled to the active site of PdxS. This is Pyridoxal 5'-phosphate synthase subunit PdxT from Carboxydothermus hydrogenoformans (strain ATCC BAA-161 / DSM 6008 / Z-2901).